The following is a 159-amino-acid chain: Protein UXT homolog (159 aa).

Belongs to the UXT family.

This Nematostella vectensis (Starlet sea anemone) protein is Protein UXT homolog.